A 245-amino-acid polypeptide reads, in one-letter code: DNA polymerase sliding clamp (245 aa).

This sequence belongs to the PCNA family. In terms of assembly, homotrimer. The subunits circularize to form a toroid; DNA passes through its center. Replication factor C (RFC) is required to load the toroid on the DNA.

In terms of biological role, sliding clamp subunit that acts as a moving platform for DNA processing. Responsible for tethering the catalytic subunit of DNA polymerase and other proteins to DNA during high-speed replication. The chain is DNA polymerase sliding clamp from Methanococcoides burtonii (strain DSM 6242 / NBRC 107633 / OCM 468 / ACE-M).